The primary structure comprises 217 residues: Small ribosomal subunit protein uS5 (217 aa).

Positions Leu-49–Val-112 constitute an S5 DRBM domain.

It belongs to the universal ribosomal protein uS5 family. Part of the 30S ribosomal subunit. Contacts protein S4.

Its function is as follows. With S4 and S12 plays an important role in translational accuracy. The protein is Small ribosomal subunit protein uS5 of Methanocaldococcus jannaschii (strain ATCC 43067 / DSM 2661 / JAL-1 / JCM 10045 / NBRC 100440) (Methanococcus jannaschii).